Consider the following 427-residue polypeptide: Tumor necrosis factor receptor superfamily member 16 (427 aa).

An N-terminal signal peptide occupies residues 1–31; that stretch reads MRRAGAACSAMDRLRLLLLLLLLLGVSFGGA. Residues 32 to 254 are Extracellular-facing; that stretch reads KETCSTGMYT…VVTRGTADNL (223 aa). TNFR-Cys repeat units follow at residues 34 to 67, 69 to 110, 111 to 149, and 151 to 191; these read TCST…QTVC, PCLD…DAVC, RCSY…NTVC, and ECPE…DAEC. Disulfide bonds link Cys35–Cys46, Cys47–Cys60, Cys50–Cys67, Cys70–Cys86, Cys89–Cys102, Cys92–Cys110, Cys112–Cys125, Cys128–Cys141, Cys131–Cys149, Cys152–Cys167, Cys170–Cys183, and Cys173–Cys191. Asn63 is a glycosylation site (N-linked (GlcNAc...) asparagine). The segment at 197 to 223 is disordered; sequence RWITRSTPPEGSDVTTPSTQEPEAPPE. A compositionally biased stretch (polar residues) spans 200–217; that stretch reads TRSTPPEGSDVTTPSTQE. A helical membrane pass occupies residues 255–275; the sequence is IPVYCSILAAVVVGLVAYIAF. Over 276–427 the chain is Cytoplasmic; that stretch reads KRWNSCKQNK…CSESTATSPV (152 aa). Polar residues-rich tracts occupy residues 284–294 and 308–329; these read NKQGANSRPVN and SGIS…TASG. A disordered region spans residues 284–334; sequence NKQGANSRPVNQTPPPEGEKLHSDSGISVDSQSLHDQQTHTQTASGQALKG. The residue at position 314 (Ser314) is a Phosphoserine. The interval 329 to 344 is mediates interaction with KIDINS220; sequence GQALKGDGNLYSSLPL. Residues 356–421 form the Death domain; that stretch reads GDTWRHLAGE…DIVESLCSES (66 aa).

Homodimer; disulfide-linked. Heterodimer with SORCS2. The extracellular domains of the heterodimer bind NGF. The cytoplasmic region of the heterodimer binds TRIO. NGF binding mediates dissociation of TRIO from the receptor complex. Interacts with TRAF2, TRAF4, TRAF6, PTPN13 and RANBP9. Interacts through TRAF6 with SQSTM1 which bridges NGFR to NTRK1. Interacts with BEX1. Interacts with BEX3. Interacts with KIDINS220 and NTRK1. Can form a ternary complex with NTRK1 and KIDINS220 and this complex is affected by the expression levels of KIDINS220. An increase in KIDINS220 expression leads to a decreased association of NGFR and NTRK1. Interacts (via death domain) with RAB31. Interacts with NTRK2; may regulate the ligand specificity of the NTRK2 receptor. Interacts with LINGO1. Interacts with NRADD. Interacts with MAGED1; the interaction antagonizes the association NGFR:NTRK1. Interacts with RTN4R. Interacts (via death domain) with ARHGDIA and RIPK2. Interacts with BFAR. As to quaternary structure, (Microbial infection) Binds to rabies virus glycoprotein Gs. In terms of processing, N-glycosylated. O-glycosylated. Phosphorylated on serine residues. In terms of tissue distribution, detected in Schwann cells. Detected in embryonic brain, in hippocampus neurons (at protein level). Detected in brain and spinal cord.

The protein resides in the cell membrane. The protein localises to the cytoplasm. It localises to the perikaryon. It is found in the cell projection. Its subcellular location is the growth cone. The protein resides in the dendritic spine. Low affinity neurotrophin receptor which can bind to mature NGF, BDNF, NTF3, and NTF4. Forms a heterodimeric receptor with SORCS2 that binds the precursor forms of NGF (proNGF), BDNF (proBDNF) and NTF3 (proNT3) with high affinity, and has much lower affinity for mature NGF and BDNF. Plays an important role in differentiation and survival of specific neuronal populations during development. Can mediate cell survival as well as cell death of neural cells. The heterodimeric receptor formed with SORCS2 plays a role in proBDNF-dependent synaptic plasticity, in hippocampal long term depression (LTD) and long term potentiation (LTP). Plays a role in the inactivation of RHOA. Plays a role in the regulation of the translocation of GLUT4 to the cell surface in adipocytes and skeletal muscle cells in response to insulin, probably by regulating RAB31 activity, and thereby contributes to the regulation of insulin-dependent glucose uptake. Necessary for the circadian oscillation of the clock genes BMAL1, PER1, PER2 and NR1D1 in the suprachiasmatic nucleus (SCN) of the brain and in liver and of the genes involved in glucose and lipid metabolism in the liver. Its function is as follows. (Microbial infection) Cell surface receptor for rabies virus glycoprotein Gs. Functionally, does not bind NGF, BDNF, NTF3, and NTF4. This chain is Tumor necrosis factor receptor superfamily member 16 (Ngfr), found in Mus musculus (Mouse).